We begin with the raw amino-acid sequence, 1431 residues long: DNA polymerase II large subunit (1431 aa).

Positions 1388–1431 are disordered; sequence LLENFANGYNKGKKEEMPKKQRKKEQEKSKKRKVISLDDFFSRK. The span at 1399 to 1415 shows a compositional bias: basic and acidic residues; it reads GKKEEMPKKQRKKEQEK.

The protein belongs to the archaeal DNA polymerase II family. In terms of assembly, heterodimer of a large subunit and a small subunit. In terms of processing, this protein undergoes a protein self splicing that involves a post-translational excision of the intervening region (intein) followed by peptide ligation.

The enzyme catalyses DNA(n) + a 2'-deoxyribonucleoside 5'-triphosphate = DNA(n+1) + diphosphate. The catalysed reaction is Exonucleolytic cleavage in the 3'- to 5'-direction to yield nucleoside 5'-phosphates.. In terms of biological role, possesses two activities: a DNA synthesis (polymerase) and an exonucleolytic activity that degrades single-stranded DNA in the 3'- to 5'-direction. Has a template-primer preference which is characteristic of a replicative DNA polymerase. The sequence is that of DNA polymerase II large subunit (polC) from Pyrococcus horikoshii (strain ATCC 700860 / DSM 12428 / JCM 9974 / NBRC 100139 / OT-3).